Reading from the N-terminus, the 127-residue chain is Modulator protein MzrA (127 aa).

Topologically, residues 1 to 10 (MLKPRITARQ) are cytoplasmic. A helical transmembrane segment spans residues 11 to 31 (LIWISAFLLMLTILMMTWSTL). Residues 32 to 127 (RQQESTLAIR…RLRESSHRFG (96 aa)) are Periplasmic-facing.

The protein belongs to the MzrA family. In terms of assembly, interacts with EnvZ.

It localises to the cell inner membrane. Modulates the activity of the EnvZ/OmpR two-component regulatory system, probably by directly modulating EnvZ enzymatic activity and increasing stability of phosphorylated OmpR. This is Modulator protein MzrA from Salmonella agona (strain SL483).